Here is an 859-residue protein sequence, read N- to C-terminus: Photoactivated adenylate cyclase subunit beta-like protein FB (859 aa).

Residues 56–149 (LRRLMYLSKS…GRMYGDWHMK (94 aa)) enclose the BLUF 1 domain. The Guanylate cyclase 1 domain maps to 205–333 (VVTFIYLVEF…DCINTTSRIA (129 aa)). The disordered stretch occupies residues 414–449 (GLPNSQRPPIFDDTPKANRRPRTPGYGGRQRSDSQV). One can recognise a BLUF 2 domain in the interval 471 to 563 (LTTLTYISQA…RVYPSEWTLT (93 aa)). One can recognise a Guanylate cyclase 2 domain in the interval 619-748 (VMLATDICSF…AVSARVMEVE (130 aa)). The disordered stretch occupies residues 813 to 859 (AARSGEKPLTEPEAAKPDFRVSPGRVRHGDSGRRSNSAQGKRSIQVR). Residues 815-831 (RSGEKPLTEPEAAKPDF) show a composition bias toward basic and acidic residues. Positions 846 to 859 (RSNSAQGKRSIQVR) are enriched in polar residues.

Belongs to the adenylyl cyclase class-4/guanylyl cyclase family. Heterotetramer of two alpha and two beta subunits.

It localises to the cell projection. It is found in the cilium. Its subcellular location is the flagellum. This Euglena gracilis protein is Photoactivated adenylate cyclase subunit beta-like protein FB.